Reading from the N-terminus, the 867-residue chain is MNISASTCGSPSSSESLPAGDLFKELWSKLKECHDKELQELLLKINKLKKQRCLDAQRLEEFYTKNQHLREQQKTLHDTIKVLEDRLRAGLCDRCTVTEEHMRKKQQEFENIRQQNLKLITELMNDKNALQDENKRLSEQLHNMQKSRWKSDEENPADTGEGEDGVIPDSPLSTFSLSMVSRMRRKKDNKHIRYSEKAPEDTLTLERKITCIPSQGSAEKNASHSSHRRKGEDILVAETLELSPLPNGKSKRKKVYLCSKTSIAFASILLVLLHLFAEQLHSWMNNLSQVSKSLRWCLPLKGNNKQGYIEYLFRFTEGSMEESQGNDDDGWNTKEASPVFGGPARNIRRSAEMDCISPPLPVGLNSKLISKCSRNPSDFLFNSVQAKAEDGAQATRLCLGKETDSVISQCSSNGQGVLRCSPNKSVPGGAQMGKDILDSEHHKQMANRYGKRKNAEAEQEESCESSFDKENNIPIKDIGSERHSMLDKPLDLSDRFSVLRPQDRSHGSSRGRTKQTFALVPEKPDPKKPLHIDLREDLYHQTKQKKVFVSGLVERSAFNLHEDKEVTEEGNQLFDDLEIETVHEPKRNARSVHRGVQPTSVLQPNLHMVQACPESQQGKPPIDNMQWSIDPGADLSQYEMDMTMEDSKGGSPAKPELEDMDYTYVSESFLLKMKKGDPGDSEDESKGQDSFEKMFDKSEYGEYVLCIKDRSPSQSCKERNDLSSMVCKNIYTHSVRFDRVKKQKAFVEPYFQRPEQKKPAMDFPHIEVVRKKDERRKMLGHTCKECELYYADLPEEERAKKLASCSRHRFRYIPPSTPENFWEVGFPSTQTCQDRGYIKEELSPCQRPRRRQPYNAKFSSKIKEQKT.

The interval 25–48 (ELWSKLKECHDKELQELLLKINKL) is essential for binding to the MRN complex and for RPA focus formation on DNA damage. Coiled coils occupy residues 38–87 (LQEL…EDRL) and 120–141 (ITEL…SEQL). Disordered regions lie at residues 141-171 (LHNM…PDSP) and 448-486 (RYGK…HSML). Over residues 154–166 (ENPADTGEGEDGV) the composition is skewed to acidic residues. A PXDLS motif motif is present at residues 489-493 (PLDLS). A damage-recruitment motif region spans residues 508-531 (SSRGRTKQTFALVPEKPDPKKPLH). Phosphothreonine is present on residues Thr-817 and Thr-829. The disordered stretch occupies residues 843–867 (SPCQRPRRRQPYNAKFSSKIKEQKT).

The protein belongs to the COM1/SAE2/CtIP family. As to quaternary structure, homotetramer; formed by antiparallel association of helical extensions protruding from the N-termini of two parallel coiled-coil dimers. Interacts with the MRN complex; the interaction links DNA sensing to resection. Interacts with samhd1. Post-translationally, phosphorylation at Thr-817 and Thr-829 promote interaction with nbn and recruitment to double-strand breaks (DSBs).

It localises to the nucleus. It is found in the chromosome. Functionally, endonuclease that cooperates with the MRE11-RAD50-NBN (MRN) complex in DNA-end resection, the first step of double-strand break (DSB) repair through the homologous recombination (HR) pathway. Functions downstream of the MRN complex and ATM, promotes ATR activation and its recruitment to DSBs in the S/G2 phase facilitating the generation of ssDNA. Specifically promotes the endonuclease activity of the MRN complex to clear DNA ends containing protein adducts: recruited to DSBs by nbn following phosphorylation, and promotes the endonuclease of mre11 to clear protein-DNA adducts and generate clean double-strand break ends. The polypeptide is DNA endonuclease RBBP8 (rbbp8) (Xenopus tropicalis (Western clawed frog)).